A 94-amino-acid chain; its full sequence is Small ribosomal subunit protein uS17 (94 aa).

Positions 1-22 (MSEQTSAASTTDRGDRKTRRGY) are disordered.

It belongs to the universal ribosomal protein uS17 family. Part of the 30S ribosomal subunit.

One of the primary rRNA binding proteins, it binds specifically to the 5'-end of 16S ribosomal RNA. This is Small ribosomal subunit protein uS17 from Kineococcus radiotolerans (strain ATCC BAA-149 / DSM 14245 / SRS30216).